A 322-amino-acid polypeptide reads, in one-letter code: Lymphokine-activated killer T-cell-originated protein kinase (322 aa).

Residue methionine 1 is modified to N-acetylmethionine. 2 positions are modified to phosphothreonine: threonine 9 and threonine 24. Serine 32 is modified (phosphoserine). The Protein kinase domain maps to 32–322 (SPFMQKLGFG…HIVEALETDV (291 aa)). Residue 38 to 46 (LGFGTGVNV) participates in ATP binding. Residue serine 59 is modified to Phosphoserine. Lysine 64 is an ATP binding site. Aspartate 167 acts as the Proton acceptor in catalysis. Residue lysine 169 forms a Glycyl lysine isopeptide (Lys-Gly) (interchain with G-Cter in SUMO2) linkage. Residues 320–322 (TDV) are PDZ-interaction.

This sequence belongs to the protein kinase superfamily. STE Ser/Thr protein kinase family. MAP kinase kinase subfamily. Interacts with DLG1 and TP53. Phosphorylated; in a cell-cycle dependent manner at mitosis. As to expression, expressed in the testis and placenta. In the testis, restrictedly expressed in outer cell layer of seminiferous tubules.

The catalysed reaction is L-seryl-[protein] + ATP = O-phospho-L-seryl-[protein] + ADP + H(+). The enzyme catalyses L-threonyl-[protein] + ATP = O-phospho-L-threonyl-[protein] + ADP + H(+). It carries out the reaction L-tyrosyl-[protein] + ATP = O-phospho-L-tyrosyl-[protein] + ADP + H(+). With respect to regulation, activated by phosphorylation. Its function is as follows. Phosphorylates MAP kinase p38. Seems to be active only in mitosis. May also play a role in the activation of lymphoid cells. When phosphorylated, forms a complex with TP53, leading to TP53 destabilization and attenuation of G2/M checkpoint during doxorubicin-induced DNA damage. The protein is Lymphokine-activated killer T-cell-originated protein kinase (PBK) of Homo sapiens (Human).